Consider the following 1150-residue polypeptide: Solute carrier family 12 member 6 (1150 aa).

The disordered stretch occupies residues 1 to 108 (MHPPEATTKM…GEHSQLLDDG (108 aa)). Topologically, residues 1 to 135 (MHPPEATTKM…DEYFDKNLAL (135 aa)) are cytoplasmic. The span at 28–45 (LSDTSPDLSSRSSSRVRF) shows a compositional bias: low complexity. Serine 32 carries the post-translational modification Phosphoserine. Residues 80–101 (DRTSNPQDVTEDPSQNSITGEH) are compositionally biased toward polar residues. Residue serine 120 is modified to Phosphoserine. Residues 136–158 (FEEEMDTRPKVSSLLNRMANYTN) traverse the membrane as a discontinuously helical segment. Residues serine 147 and serine 148 each contribute to the K(+) site. Serine 148 is modified (phosphoserine). Chloride is bound at residue asparagine 151. At 159–165 (LTQGAKE) the chain is on the extracellular side. The segment at 161–181 (QGAKEHEEAENITEGKKKPTK) is disordered. Positions 163–177 (AKEHEEAENITEGKK) are enriched in basic and acidic residues. The chain crosses the membrane as a helical span at residues 166 to 188 (HEEAENITEGKKKPTKSPQMGTF). At 189–211 (MGVYLPCLQNIFGVILFLRLTWV) the chain is on the cytoplasmic side. A helical transmembrane segment spans residues 212 to 245 (VGTAGILQAFAIVLICCCCTMLTAISMSAIATNG). Topologically, residues 246–263 (VVPAGGSYFMISRALGPE) are extracellular. Helical transmembrane passes span 264 to 287 (FGGA…ILGA) and 288 to 316 (IEIF…AMLN). Tyrosine 283 lines the K(+) pocket. Residues 317–433 (NMRVYGTAFL…FVHNNVISIQ (117 aa)) are Extracellular-facing. Cysteines 375 and 390 form a disulfide. N-linked (GlcNAc...) asparagine glycans are attached at residues asparagine 379, asparagine 398, asparagine 411, and asparagine 417. The cysteines at positions 410 and 420 are disulfide-linked. The chain crosses the membrane as a helical span at residues 434-454 (GIPGLASGIITENLWSNYLPK). 3 residues coordinate K(+): isoleucine 443, threonine 444, and asparagine 446. Chloride contacts are provided by isoleucine 443 and threonine 444. Chloride is bound by residues leucine 447 and tryptophan 448. Over 455 to 464 (GEIIEKPSAK) the chain is Cytoplasmic. A helical membrane pass occupies residues 465–487 (SSDVLGNLNHEYVLADITTSFTL). At 488–518 (LVGIFFPSVTGIMAGSNRSGDLKDAQKSIPI) the chain is on the extracellular side. Threonine 497 is a K(+) binding site. Residues 519–545 (GTILAILTTSFVYLSNVVLFGACIEGV) form a helical membrane-spanning segment. Over 546–568 (VLRDKFGDAVKGNLVVGTLSWPS) the chain is Cytoplasmic. The next 2 helical transmembrane spans lie at 569–589 (PWVI…QSLT) and 590–612 (GAPR…VFGH). Position 603 (isoleucine 603) interacts with chloride. At 613–629 (SKANGEPTWALLLTAAI) the chain is on the cytoplasmic side. 2 helical membrane-spanning segments follow: residues 630–649 (AELG…LSMF) and 650–665 (FLMC…ALQT). Tyrosine 654 lines the chloride pocket. Topologically, residues 666–1150 (LLRTPNWRPR…GGSEVITIYS (485 aa)) are cytoplasmic. Residues 682–691 (ALSFMGMSIC) are scissor helix. The residue at position 736 (serine 736) is a Phosphoserine. Threonine 778 is modified (phosphothreonine). Serine 981 carries the phosphoserine modification. Threonine 991 is modified (phosphothreonine). A phosphoserine mark is found at serine 1023, serine 1029, and serine 1032. The residue at position 1048 (threonine 1048) is a Phosphothreonine. A Phosphotyrosine modification is found at tyrosine 1121.

This sequence belongs to the SLC12A transporter family. K/Cl co-transporter subfamily. Homodimer; adopts a domain-swap conformation at the scissor helices connecting the transmembrane domain and C-terminal domain. Heterodimer with K-Cl cotransporter SLC12A5. Interacts (via C-terminus) with CKB; the interaction may be required for potassium-chloride cotransport activity. In terms of processing, phosphorylated, phosphorylation regulates transporter activity. Phosphorylated at Thr-991 and Thr-1048 by OXSR1/OSR1 and STK39/SPAK downstream of WNK kinases (WNK1, WNK2, WNK3 or WNK4), inhibiting the potassium-chloride cotransport activity. N-glycosylated. Expressed in hippocampus and corpus callosum (at protein level). Highly expressed throughout the brain and detected at lower levels in kidney. Highly expressed in highly myelinated white matter of the brain, but not in gray matter. Detected in the corpus callosum, in packed cell layers of the hippocampus and in Purkinje neurons within the cerebellum. Highly expressed in white matter in the spinal cord, but not in dorsal root ganglia or sciatic nerve. Colocalizes with the oligodendrocyte marker CNP. Expressed in hippocampus in CA1, and to a lesser extent CA3 pyramidal cells. Also expressed in cortex, mostly in large neurons and in the large cerebellar Purkinje cells. In terms of tissue distribution, highly expressed in kidney, but not detected in brain.

The protein localises to the cell membrane. It is found in the basolateral cell membrane. The catalysed reaction is K(+)(in) + chloride(in) = K(+)(out) + chloride(out). Its activity is regulated as follows. Inhibited following phosphorylation by OXSR1/OSR1 and STK39/SPAK: phosphorylation takes place downstream of WNK kinases (WNK1, WNK2, WNK3 or WNK4) in response to hyperosmotic stress and subsequent cell shrinkage. Mediates electroneutral potassium-chloride cotransport when activated by cell swelling. May contribute to cell volume homeostasis in single cells. In terms of biological role, mediates electroneutral potassium-chloride cotransport when activated by cell swelling. May contribute to cell volume homeostasis in single cells. The chain is Solute carrier family 12 member 6 (Slc12a6) from Mus musculus (Mouse).